We begin with the raw amino-acid sequence, 44 residues long: Photosystem I reaction center subunit IX (44 aa).

A helical transmembrane segment spans residues 9–29 (FIRSAPVVAAVWLSLTAGIII).

The protein belongs to the PsaJ family.

The protein resides in the cellular thylakoid membrane. Functionally, may help in the organization of the PsaE and PsaF subunits. The sequence is that of Photosystem I reaction center subunit IX from Prochlorococcus marinus subsp. pastoris (strain CCMP1986 / NIES-2087 / MED4).